The sequence spans 228 residues: Prolactin-2A1 (228 aa).

Residues 1–28 form the signal peptide; that stretch reads MQLSVTHPCCRTLILLLVSNLLLWESEA. 2 disulfide bridges follow: Cys-87–Cys-203 and Cys-220–Cys-228.

This sequence belongs to the somatotropin/prolactin family. As to expression, expressed specifically in the placenta. Expression restricted to the junctional zone of the chorioallantoic placenta.

Its subcellular location is the secreted. This chain is Prolactin-2A1 (Prl2a1), found in Mus musculus (Mouse).